We begin with the raw amino-acid sequence, 359 residues long: UPF0284 protein MTH_1426 (359 aa).

Belongs to the UPF0284 family.

This Methanothermobacter thermautotrophicus (strain ATCC 29096 / DSM 1053 / JCM 10044 / NBRC 100330 / Delta H) (Methanobacterium thermoautotrophicum) protein is UPF0284 protein MTH_1426.